The primary structure comprises 576 residues: POU domain, class 6, transcription factor 1 (576 aa).

A disordered region spans residues 65–88 (PAEAGSCDPDHSAEATVAARSPSE). The 75-residue stretch at 414 to 488 (EDGINLEEIR…VLEKWLMEAE (75 aa)) folds into the POU-specific domain. A DNA-binding region (homeobox) is located at residues 509–568 (KRKRRTSFTPQAIEALNAYFEKNPLPTGQEITEIAKELNYDREVVRVWFCNRRQTLKNTS).

The protein belongs to the POU transcription factor family. Class-6 subfamily. As to expression, isoform C1 and isoform C2 are found in the brain, while isoform C7 is found in the testis.

The protein localises to the nucleus. In terms of biological role, transcription factor that binds preferentially to a variant of the octamer motif (5'-ATGATAAT-3'). The chain is POU domain, class 6, transcription factor 1 (Pou6f1) from Mus musculus (Mouse).